Consider the following 1450-residue polypeptide: Auxilin-like protein 1 (1450 aa).

Disordered regions lie at residues 117–142 (NEDKKRNRRKGGNSSDVPLCNEGKKS), 241–318 (STRD…AESS), 357–383 (DSKIENKGNTKVEGITEESRDNNSQIL), 459–480 (NSKQQEPENLAPAKPEPDTKQE), 512–541 (SQKDEKQFTEKENSTVTQMVQDEESDSQEM), 556–575 (EETPQQTESKSEMNIEEKSE), 908–946 (DRSETDSNNSRERFDQTQEQAEETMIDGSIDTDTSRSSF), 961–1046 (EQHR…ELEH), 1077–1168 (GAAT…ERKQ), 1192–1241 (AGKT…AERA), and 1254–1328 (AMEK…SDRA). Residues 316 to 344 (ESSAALKKAIEEAQIRMNIAKQMMEKKKS) adopt a coiled-coil conformation. Positions 357–366 (DSKIENKGNT) are enriched in basic and acidic residues. Composition is skewed to basic and acidic residues over residues 512–524 (SQKDEKQFTEKEN), 564–575 (SKSEMNIEEKSE), 908–923 (DRSETDSNNSRERFDQ), 1037–1046 (RNGDKKELEH), 1117–1131 (NMKENEGEESCRSSM), 1147–1168 (ETVEEHLKKIDETREKERERKQ), and 1192–1226 (AGKTAMEKAKAVAHRREVPRKSEKGSVEVNDKLSS). 2 coiled-coil regions span residues 1142 to 1184 (SQNK…RERA) and 1219 to 1257 (EVNDKLSSAEKASMQAKLRAERAAVERAITEVRERAMEK). Positions 1270 to 1299 (SYGGSKSFSSSGERRGSSSSGTENKSSGPS) are enriched in low complexity. Residues 1310 to 1328 (PIQRCKARSERHQRTSDRA) are compositionally biased toward basic and acidic residues. Residues 1327 to 1355 (RAAEALAEKKLRDLKTQKEQTERNRLAEA) adopt a coiled-coil conformation. A J domain is found at 1377-1450 (TLQYILGAES…AWNKFGADER (74 aa)).

This is Auxilin-like protein 1 (AUL1) from Arabidopsis thaliana (Mouse-ear cress).